Here is a 203-residue protein sequence, read N- to C-terminus: Cupin-domain-containing oxidoreductase fogC (203 aa).

The tract at residues 105 to 171 is cupin-like domain; sequence DFAPGVESPL…GNGTLPGRML (67 aa).

Belongs to the virC family.

It participates in secondary metabolite biosynthesis. In terms of biological role, cupin-domain-containing oxidoreductase; part of the gene cluster that mediates the biosynthesis of flavoglaucin and congeners (including aspergin, dihydroauroglaucin and auroglaucin), prenylated salicylaldehyde derivatives carrying a saturated or an unsaturated C-7 side chain. The PKS fogA releases the carboxylic acid (8E,10E,12E)-3,5,7-trihydroxytetradeca-8,10,12-trienoic acid as its product, as well as derivatives with one and two double bonds. FogA is indeed able to reduce the initial triketide, thus being at least partially responsible for the differently saturated heptyl side chains of flavoglaucin congeners. The oxidoreductases fogB, fogC and fogD modify the nascent polyketide in fogA-bound form and, together, fogA, fogB, fogC and fogD are necessary for the formation of the aromatic core and the cyclized PKS products are released as salicyl alcohols. In particular, fogB is responsible for oxidation of a hydroxyl group or reduction of remaining double bond(s) at the C-7 residue whereas fogD is probably involved in the reductive release of the modified PKS products. The cytochrome P450 monooxygenase fogE is then responsible for the hydroxylation at C-3 of the benzene ring. The fogE products are substrates of the prenyltransferase fogH and the prenylated benzyl alcohols are subsequently oxidized by the fogF to produce the final aryl aldehydes flavoglaucin and congeners. The short-chain dehydrogenase fogG does not seem to be involved in the biosynthesis of the prenylated salicylaldehyde derivatives. The sequence is that of Cupin-domain-containing oxidoreductase fogC from Aspergillus ruber (strain CBS 135680).